The sequence spans 432 residues: Adenylosuccinate synthetase (432 aa).

Residues 12–18 (GDEGKGK) and 40–42 (GHT) contribute to the GTP site. The Proton acceptor role is filled by Asp13. Asp13 and Gly40 together coordinate Mg(2+). IMP contacts are provided by residues 13–16 (DEGK), 38–41 (NAGH), Thr132, Arg146, Gln226, Thr241, and Arg305. His41 serves as the catalytic Proton donor. A substrate-binding site is contributed by 301 to 307 (TVTGRKR). GTP contacts are provided by residues Arg307, 333 to 335 (KLD), and 415 to 417 (STS).

The protein belongs to the adenylosuccinate synthetase family. In terms of assembly, homodimer. Requires Mg(2+) as cofactor.

It localises to the cytoplasm. The enzyme catalyses IMP + L-aspartate + GTP = N(6)-(1,2-dicarboxyethyl)-AMP + GDP + phosphate + 2 H(+). It functions in the pathway purine metabolism; AMP biosynthesis via de novo pathway; AMP from IMP: step 1/2. Plays an important role in the de novo pathway of purine nucleotide biosynthesis. Catalyzes the first committed step in the biosynthesis of AMP from IMP. The sequence is that of Adenylosuccinate synthetase from Agrobacterium fabrum (strain C58 / ATCC 33970) (Agrobacterium tumefaciens (strain C58)).